The following is a 743-amino-acid chain: FHF complex subunit HOOK-interacting protein 2B (743 aa).

The tract at residues 186–219 (CGEPTALPKDTTSHGDKDCSHDGAPARPQLDGES) is disordered. Over residues 196-206 (TTSHGDKDCSH) the composition is skewed to basic and acidic residues.

The protein belongs to the FHIP family. In terms of tissue distribution, expressed in liver.

In terms of biological role, able to activate MAPK/ERK and TGFB signaling pathways. May regulate the activity of genes involved in intestinal barrier function and immunoprotective inflammation. May play a role in cell proliferation. This chain is FHF complex subunit HOOK-interacting protein 2B, found in Homo sapiens (Human).